A 968-amino-acid chain; its full sequence is Alanine--tRNA ligase, cytoplasmic (968 aa).

At methionine 1 the chain carries N-acetylmethionine. Serine 3 carries the phosphoserine modification. Lysine 19 is subject to N6-acetyllysine. Residues arginine 77, histidine 95, tryptophan 176, and 214–216 (IWN) each bind ATP. L-alanine is bound by residues asparagine 216 and aspartate 239. Glycine 243 is an ATP binding site. Serine 399 and serine 555 each carry phosphoserine. Zn(2+) is bound by residues histidine 605, histidine 609, cysteine 723, and histidine 727. The Nuclear localization signal signature appears at 750–763 (RRIVAVTGAEAQKA). Lysine 876 bears the N6-acetyllysine mark. Lysine 943 carries the N6,N6,N6-trimethyllysine; alternate modification. Lysine 943 carries the N6,N6-dimethyllysine; alternate modification. At lysine 943 the chain carries N6-methyllysine; alternate.

This sequence belongs to the class-II aminoacyl-tRNA synthetase family. Monomer. Interacts with ANKRD16; the interaction is direct. The cofactor is Zn(2+). ISGylated. In terms of processing, methylation at 'Lys-943' by METTL21C.

It is found in the cytoplasm. The protein localises to the nucleus. The catalysed reaction is tRNA(Ala) + L-alanine + ATP = L-alanyl-tRNA(Ala) + AMP + diphosphate. It carries out the reaction (S)-lactate + ATP + H(+) = (S)-lactoyl-AMP + diphosphate. The enzyme catalyses (S)-lactoyl-AMP + L-lysyl-[protein] = N(6)-[(S)-lactoyl]-L-lysyl-[protein] + AMP + 2 H(+). The protein lactyltransferase activity is inhibited by beta-alanine. Its function is as follows. Catalyzes the attachment of alanine to tRNA(Ala) in a two-step reaction: alanine is first activated by ATP to form Ala-AMP and then transferred to the acceptor end of tRNA(Ala). Also edits incorrectly charged tRNA(Ala) via its editing domain. In presence of high levels of lactate, also acts as a protein lactyltransferase that mediates lactylation of lysine residues in target proteins, such as TEAD1, TP53/p53 and YAP1. Protein lactylation takes place in a two-step reaction: lactate is first activated by ATP to form lactate-AMP and then transferred to lysine residues of target proteins. Acts as an inhibitor of TP53/p53 activity by catalyzing lactylation of TP53/p53. Acts as a positive regulator of the Hippo pathway by mediating lactylation of TEAD1 and YAP1. The chain is Alanine--tRNA ligase, cytoplasmic (Aars1) from Rattus norvegicus (Rat).